The following is a 474-amino-acid chain: Trehalose-6-phosphate synthase (474 aa).

Arginine 10 provides a ligand contact to D-glucose 6-phosphate. UDP-alpha-D-glucose is bound at residue 22-23 (GG). Positions 77 and 131 each coordinate D-glucose 6-phosphate. The UDP-alpha-D-glucose site is built by arginine 263 and lysine 268. A D-glucose 6-phosphate-binding site is contributed by arginine 301. UDP-alpha-D-glucose is bound by residues phenylalanine 340 and 366-370 (LVAKE).

Belongs to the glycosyltransferase 20 family. As to quaternary structure, homotetramer.

It catalyses the reaction D-glucose 6-phosphate + UDP-alpha-D-glucose = alpha,alpha-trehalose 6-phosphate + UDP + H(+). It participates in glycan biosynthesis; trehalose biosynthesis. Probably involved in the osmoprotection via the biosynthesis of trehalose. Catalyzes the transfer of glucose from UDP-alpha-D-glucose (UDP-Glc) to D-glucose 6-phosphate (Glc-6-P) to form trehalose-6-phosphate. Acts with retention of the anomeric configuration of the UDP-sugar donor. This chain is Trehalose-6-phosphate synthase, found in Escherichia coli O6:K15:H31 (strain 536 / UPEC).